The following is a 125-amino-acid chain: Putative RNA polymerase sigma-G factor (125 aa).

Belongs to the sigma-70 factor family.

Sigma factors are initiation factors that promote the attachment of RNA polymerase to specific initiation sites and are then released. The sequence is that of Putative RNA polymerase sigma-G factor from Bacillus thuringiensis subsp. kurstaki.